The following is a 360-amino-acid chain: MAKLPVEKMRELERRFGEIEARMSAGPSADVYVKLASEYSELQPVVSKIRAYEKATAELADIAAMLADRATDKDMRDLAEMEKPEVEEKIEALEQEIQILLLPKDAADEKSAILEIRAGTGGSEAALFAGDLFRMYERYAASKGWRVEVLSASEGEAGGYKEIIATVSGRGVFSRLKFESGVHRVQRVPETEASGRIHTSAATVAVLPEAEEIDIDVRPEDIRVDTMRSSGAGGQHVNTTDSAVRITHIPTGIVVTSSEKSQHQNRAKAMQVLRSRLYDMERQRADSERSADRRSQVGSGDRSERIRTYNFPQGRLTDHRINLTLYKLDRMMEGEIDDVVDALLADYQASQLALLGERQN.

At Gln235 the chain carries N5-methylglutamine. Basic and acidic residues predominate over residues 281–307; the sequence is ERQRADSERSADRRSQVGSGDRSERIR. Residues 281–311 are disordered; it reads ERQRADSERSADRRSQVGSGDRSERIRTYNF.

The protein belongs to the prokaryotic/mitochondrial release factor family. Post-translationally, methylated by PrmC. Methylation increases the termination efficiency of RF1.

Its subcellular location is the cytoplasm. Functionally, peptide chain release factor 1 directs the termination of translation in response to the peptide chain termination codons UAG and UAA. This is Peptide chain release factor 1 from Rhizobium meliloti (strain 1021) (Ensifer meliloti).